A 352-amino-acid polypeptide reads, in one-letter code: UDP-N-acetylglucosamine--N-acetylmuramyl-(pentapeptide) pyrophosphoryl-undecaprenol N-acetylglucosamine transferase (352 aa).

UDP-N-acetyl-alpha-D-glucosamine is bound by residues 11–13 (TGG), N120, R161, S188, and Q286.

It belongs to the glycosyltransferase 28 family. MurG subfamily.

It localises to the cell inner membrane. It carries out the reaction di-trans,octa-cis-undecaprenyl diphospho-N-acetyl-alpha-D-muramoyl-L-alanyl-D-glutamyl-meso-2,6-diaminopimeloyl-D-alanyl-D-alanine + UDP-N-acetyl-alpha-D-glucosamine = di-trans,octa-cis-undecaprenyl diphospho-[N-acetyl-alpha-D-glucosaminyl-(1-&gt;4)]-N-acetyl-alpha-D-muramoyl-L-alanyl-D-glutamyl-meso-2,6-diaminopimeloyl-D-alanyl-D-alanine + UDP + H(+). Its pathway is cell wall biogenesis; peptidoglycan biosynthesis. Its function is as follows. Cell wall formation. Catalyzes the transfer of a GlcNAc subunit on undecaprenyl-pyrophosphoryl-MurNAc-pentapeptide (lipid intermediate I) to form undecaprenyl-pyrophosphoryl-MurNAc-(pentapeptide)GlcNAc (lipid intermediate II). The polypeptide is UDP-N-acetylglucosamine--N-acetylmuramyl-(pentapeptide) pyrophosphoryl-undecaprenol N-acetylglucosamine transferase (Prochlorococcus marinus (strain NATL2A)).